We begin with the raw amino-acid sequence, 1502 residues long: tRNA (32-2'-O)-methyltransferase regulator trm732 (1502 aa).

This sequence belongs to the THADA family.

It localises to the cytoplasm. The protein resides in the nucleus. In terms of biological role, together with methyltransferase trm7, methylates the 2'-O-ribose of nucleotides at position 32 of the anticodon loop of substrate tRNAs. The protein is tRNA (32-2'-O)-methyltransferase regulator trm732 of Schizosaccharomyces pombe (strain 972 / ATCC 24843) (Fission yeast).